The primary structure comprises 696 residues: Carotenoid dioxygenase carX (696 aa).

The segment covering 1 to 16 (MKFLQQNSFTQTSMSQ) has biased composition (polar residues). Residues 1-27 (MKFLQQNSFTQTSMSQPHEDVSPPLRH) form a disordered region. Fe(2+)-binding residues include histidine 244, histidine 298, histidine 361, and histidine 642.

The protein belongs to the carotenoid oxygenase family. Fe(2+) serves as cofactor.

It catalyses the reaction all-trans-beta-carotene + O2 = 2 all-trans-retinal. It functions in the pathway carotenoid biosynthesis. Carotenoid dioxygenase; part of the car gene cluster that mediates the biosynthesis of neurosporaxanthin, a carboxylic apocarotenoid acting as an essential protective pigments and leading to orange pigmentation. CarX mediates the cleavage of beta-carotene produced by carAR into retinal, the rhodopsin's chromophore that is involved in the regulation of the carotenoid biosynthetic pathway via a negative feedback mechanism. It can also convert the synthetic compound beta-apo-8'-carotenal but not C35-apocarotenoids such as the acidic apocarotenoid neurosporaxanthin (C35), as well as its corresponding aldehyde beta-apo-4'-carotenal. The sequence is that of Carotenoid dioxygenase carX from Gibberella fujikuroi (strain CBS 195.34 / IMI 58289 / NRRL A-6831) (Bakanae and foot rot disease fungus).